Consider the following 352-residue polypeptide: Adenosine deaminase (352 aa).

The Zn(2+) site is built by histidine 24 and histidine 26. Substrate-binding residues include histidine 26, aspartate 28, and glycine 181. A Zn(2+)-binding site is contributed by histidine 208. Glutamate 211 acts as the Proton donor in catalysis. Residue aspartate 290 participates in Zn(2+) binding.

It belongs to the metallo-dependent hydrolases superfamily. Adenosine and AMP deaminases family. Adenosine deaminase subfamily. Requires Zn(2+) as cofactor.

The enzyme catalyses adenosine + H2O + H(+) = inosine + NH4(+). The catalysed reaction is 2'-deoxyadenosine + H2O + H(+) = 2'-deoxyinosine + NH4(+). Functionally, catalyzes the hydrolytic deamination of adenosine and 2-deoxyadenosine. The protein is Adenosine deaminase of Lactococcus lactis subsp. lactis (strain IL1403) (Streptococcus lactis).